We begin with the raw amino-acid sequence, 266 residues long: Phage-like element PBSX protein XkdC (266 aa).

Residue 124–131 (GQPGSGKT) coordinates ATP.

It to B.subtilis YqaM.

Its function is as follows. May function as a transcriptional antiterminator. This chain is Phage-like element PBSX protein XkdC (xkdC), found in Bacillus subtilis (strain 168).